A 177-amino-acid polypeptide reads, in one-letter code: ATP synthase subunit delta (177 aa).

The protein belongs to the ATPase delta chain family. In terms of assembly, F-type ATPases have 2 components, F(1) - the catalytic core - and F(0) - the membrane proton channel. F(1) has five subunits: alpha(3), beta(3), gamma(1), delta(1), epsilon(1). F(0) has three main subunits: a(1), b(2) and c(10-14). The alpha and beta chains form an alternating ring which encloses part of the gamma chain. F(1) is attached to F(0) by a central stalk formed by the gamma and epsilon chains, while a peripheral stalk is formed by the delta and b chains.

It is found in the cell inner membrane. Its function is as follows. F(1)F(0) ATP synthase produces ATP from ADP in the presence of a proton or sodium gradient. F-type ATPases consist of two structural domains, F(1) containing the extramembraneous catalytic core and F(0) containing the membrane proton channel, linked together by a central stalk and a peripheral stalk. During catalysis, ATP synthesis in the catalytic domain of F(1) is coupled via a rotary mechanism of the central stalk subunits to proton translocation. Functionally, this protein is part of the stalk that links CF(0) to CF(1). It either transmits conformational changes from CF(0) to CF(1) or is implicated in proton conduction. The polypeptide is ATP synthase subunit delta (Neisseria gonorrhoeae (strain ATCC 700825 / FA 1090)).